We begin with the raw amino-acid sequence, 307 residues long: DDRGK domain-containing protein 1 (307 aa).

The Lumenal portion of the chain corresponds to 1–2 (MD). The helical transmembrane segment at 3–23 (LILLVGIATALLLILITLYFL) threads the bilayer. The Cytoplasmic portion of the chain corresponds to 24 to 307 (QSKNAKTETK…TPVAAGESSA (284 aa)). The tract at residues 31–175 (ETKAAAQPQR…EADRLAKEER (145 aa)) is disordered. Positions 52-83 (RRAQIARNQRNRLRQNQNAPAVAAAAAPAAAV) are enriched in low complexity. The span at 107 to 175 (LDEKMGAKKR…EADRLAKEER (69 aa)) shows a compositional bias: basic and acidic residues.

This sequence belongs to the DDRGK1 family. Interacts with Atg9; the interaction is transient.

The protein localises to the endoplasmic reticulum membrane. Functionally, substrate adapter for ufmylation, the covalent attachment of the ubiquitin-like modifier UFM1 to substrate proteins. Required for ufmylation of Atg9; protects the nervous system during aging, possibly by stabilizing Atg9 and supporting its function. This chain is DDRGK domain-containing protein 1, found in Drosophila virilis (Fruit fly).